The chain runs to 248 residues: Mannosylfructose-phosphate phosphatase (248 aa).

It belongs to the sucrose phosphatase family.

The catalysed reaction is beta-D-fructofuranosyl alpha-D-mannopyranoside 6(F)-phosphate + H2O = beta-D-fructofuranosyl alpha-D-mannopyranoside + phosphate. Its pathway is carbohydrate metabolism; mannosylfructose biosynthesis; beta-D-fructofuranosyl alpha-D-mannopyranoside from D-fructose 6-phosphate and GDP-alpha-D-mannose: step 2/2. Its activity is regulated as follows. Inhibited by the phosphatase inhibitors fluoride, molybdate and orthovanadate. This chain is Mannosylfructose-phosphate phosphatase, found in Agrobacterium fabrum (strain C58 / ATCC 33970) (Agrobacterium tumefaciens (strain C58)).